Here is a 657-residue protein sequence, read N- to C-terminus: KNR4/SMI1 homolog (657 aa).

Disordered stretches follow at residues 168–193 (EQQQ…QKGY), 366–402 (SSSV…ESVS), and 416–657 (LTQT…TVAL). Residues 174–187 (KSSSELPQTVTPQA) show a composition bias toward polar residues. The segment covering 416–436 (LTQTDASSKGTTKPATPNPMT) has biased composition (polar residues). Low complexity-rich tracts occupy residues 444-455 (STPGSPSAAAEA) and 473-482 (TPTVTKESTP). Residues 492–504 (LDSKNTETNEDTR) are compositionally biased toward basic and acidic residues. Polar residues predominate over residues 505 to 521 (ATNTAHSMAPTVSSAIT). 3 stretches are compositionally biased toward basic and acidic residues: residues 535–561 (KPKD…KANE), 569–604 (VEPK…EKKV), and 627–650 (KSDK…KLNE).

It belongs to the KNR4/SMI1 family.

The sequence is that of KNR4/SMI1 homolog from Eremothecium gossypii (strain ATCC 10895 / CBS 109.51 / FGSC 9923 / NRRL Y-1056) (Yeast).